The primary structure comprises 650 residues: Probable LIM domain-containing serine/threonine-protein kinase DDB_G0287001 (650 aa).

LIM zinc-binding domains lie at 4 to 63 and 64 to 122; these read NNCG…KLNA and RKCF…PSDK. Disordered stretches follow at residues 118-138, 171-197, and 293-320; these read KPSDKTKTTTPPPSEIPLPGK, LSSSGGSGNSISGSGGTNTGSSTSSFM, and LLNSSSPSPSTSSTSSTSSISQSQNLNT. Over residues 173 to 188 the composition is skewed to gly residues; it reads SSGGSGNSISGSGGTN. The region spanning 386 to 643 is the Protein kinase domain; it reads VAFGDVIASG…DTLKKISESL (258 aa). ATP is bound by residues 392–400 and lysine 413; that span reads IASGASGKV. The active-site Proton acceptor is aspartate 509.

The protein belongs to the protein kinase superfamily. TKL Ser/Thr protein kinase family.

It catalyses the reaction L-seryl-[protein] + ATP = O-phospho-L-seryl-[protein] + ADP + H(+). The catalysed reaction is L-threonyl-[protein] + ATP = O-phospho-L-threonyl-[protein] + ADP + H(+). In Dictyostelium discoideum (Social amoeba), this protein is Probable LIM domain-containing serine/threonine-protein kinase DDB_G0287001.